A 394-amino-acid polypeptide reads, in one-letter code: GTPase Obg (394 aa).

One can recognise an Obg domain in the interval 4 to 162 (SNFVDYVKIY…LMVILELKLL (159 aa)). One can recognise an OBG-type G domain in the interval 163–329 (ADVGLVGFPN…LKDILWTELN (167 aa)). GTP-binding positions include 169–176 (GFPNAGKS), 194–198 (FTTLE), 216–219 (DIPG), 283–286 (TKSD), and 310–312 (SSV). Residues Ser176 and Thr196 each contribute to the Mg(2+) site. Positions 358–394 (KDMGEDEDFEYEYEEDADDDFDYEYEDENWDEEEEKK) are disordered. Acidic residues predominate over residues 361–394 (GEDEDFEYEYEEDADDDFDYEYEDENWDEEEEKK).

It belongs to the TRAFAC class OBG-HflX-like GTPase superfamily. OBG GTPase family. As to quaternary structure, monomer. It depends on Mg(2+) as a cofactor.

Its subcellular location is the cytoplasm. An essential GTPase which binds GTP, GDP and possibly (p)ppGpp with moderate affinity, with high nucleotide exchange rates and a fairly low GTP hydrolysis rate. Plays a role in control of the cell cycle, stress response, ribosome biogenesis and in those bacteria that undergo differentiation, in morphogenesis control. The protein is GTPase Obg of Phocaeicola vulgatus (strain ATCC 8482 / DSM 1447 / JCM 5826 / CCUG 4940 / NBRC 14291 / NCTC 11154) (Bacteroides vulgatus).